Consider the following 312-residue polypeptide: Methionyl-tRNA formyltransferase (312 aa).

(6S)-5,6,7,8-tetrahydrofolate is bound at residue 109-112 (SLLP).

It belongs to the Fmt family.

The enzyme catalyses L-methionyl-tRNA(fMet) + (6R)-10-formyltetrahydrofolate = N-formyl-L-methionyl-tRNA(fMet) + (6S)-5,6,7,8-tetrahydrofolate + H(+). In terms of biological role, attaches a formyl group to the free amino group of methionyl-tRNA(fMet). The formyl group appears to play a dual role in the initiator identity of N-formylmethionyl-tRNA by promoting its recognition by IF2 and preventing the misappropriation of this tRNA by the elongation apparatus. This Anaeromyxobacter dehalogenans (strain 2CP-C) protein is Methionyl-tRNA formyltransferase.